The primary structure comprises 463 residues: Spermidine/putrescine import ATP-binding protein PotA (463 aa).

The 231-residue stretch at 10–240 (IEVSHVSKFF…PINSFVADFI (231 aa)) folds into the ABC transporter domain. Residue 42-49 (GPSGCGKT) participates in ATP binding.

This sequence belongs to the ABC transporter superfamily. Spermidine/putrescine importer (TC 3.A.1.11.1) family. As to quaternary structure, the complex is composed of two ATP-binding proteins (PotA), two transmembrane proteins (PotB and PotC) and a solute-binding protein (PotD).

The protein localises to the cell inner membrane. The enzyme catalyses ATP + H2O + polyamine-[polyamine-binding protein]Side 1 = ADP + phosphate + polyamineSide 2 + [polyamine-binding protein]Side 1.. Its function is as follows. Part of the ABC transporter complex PotABCD involved in spermidine/putrescine import. Responsible for energy coupling to the transport system. This is Spermidine/putrescine import ATP-binding protein PotA from Bacteroides thetaiotaomicron (strain ATCC 29148 / DSM 2079 / JCM 5827 / CCUG 10774 / NCTC 10582 / VPI-5482 / E50).